A 407-amino-acid polypeptide reads, in one-letter code: 5-aminolevulinate synthase 2 (407 aa).

Substrate-binding residues include Arg-21 and Ser-137. Ser-189, His-217, and Thr-245 together coordinate pyridoxal 5'-phosphate. Lys-248 is an active-site residue. Position 248 is an N6-(pyridoxal phosphate)lysine (Lys-248). Pyridoxal 5'-phosphate is bound by residues Thr-277 and Thr-278. Thr-363 is a substrate binding site.

It belongs to the class-II pyridoxal-phosphate-dependent aminotransferase family. As to quaternary structure, homodimer. The cofactor is pyridoxal 5'-phosphate.

The enzyme catalyses succinyl-CoA + glycine + H(+) = 5-aminolevulinate + CO2 + CoA. The protein operates within porphyrin-containing compound metabolism; protoporphyrin-IX biosynthesis; 5-aminolevulinate from glycine: step 1/1. The sequence is that of 5-aminolevulinate synthase 2 (hemT) from Cereibacter sphaeroides (strain ATCC 17023 / DSM 158 / JCM 6121 / CCUG 31486 / LMG 2827 / NBRC 12203 / NCIMB 8253 / ATH 2.4.1.) (Rhodobacter sphaeroides).